The chain runs to 49 residues: Large ribosomal subunit protein bL33B (49 aa).

This sequence belongs to the bacterial ribosomal protein bL33 family.

The polypeptide is Large ribosomal subunit protein bL33B (Limosilactobacillus reuteri subsp. reuteri (strain JCM 1112) (Lactobacillus reuteri)).